Here is an 875-residue protein sequence, read N- to C-terminus: Valine--tRNA ligase (875 aa).

Residues 45 to 55 (PNVTGVLHMGH) carry the 'HIGH' region motif. A 'KMSKS' region motif is present at residues 524 to 528 (KMSKS). Lys527 serves as a coordination point for ATP. The stretch at 803–837 (VKSLIDKTKELIRLEKQLEKYKMLNISVSKKLENE) forms a coiled coil.

Belongs to the class-I aminoacyl-tRNA synthetase family. ValS type 1 subfamily. In terms of assembly, monomer.

It localises to the cytoplasm. The enzyme catalyses tRNA(Val) + L-valine + ATP = L-valyl-tRNA(Val) + AMP + diphosphate. Catalyzes the attachment of valine to tRNA(Val). As ValRS can inadvertently accommodate and process structurally similar amino acids such as threonine, to avoid such errors, it has a 'posttransfer' editing activity that hydrolyzes mischarged Thr-tRNA(Val) in a tRNA-dependent manner. The polypeptide is Valine--tRNA ligase (Borreliella burgdorferi (strain ATCC 35210 / DSM 4680 / CIP 102532 / B31) (Borrelia burgdorferi)).